The following is a 478-amino-acid chain: MAASQLAALEGVDSGPRVPGASPGFLYSEGQRLALEALLSKGAEAFQTCVQREELWPFLSADEVQGLAAAAEDWTVAKQEPSGMAEGATTTDVDAGSLSYWPGQSEQPAPVLRLGWPVDSAWKGITRAQLYTQPPGEGQPPLKELVRLEIQAAHKLVAVVMDVFTDPDLLLDLVDAATRRWVPVYLLLDRQQLPAFLELAQQLGVNPWNTENVDVRVVRGCSFQSRWRRQVSGTVREKFVLLDGERVISGSYSFTWSDARLHRGLVTLLTGEIVDAFSLEFRTLYAASCPLPPAPPQKPSVIGGLQRGRSPHRVSRRRSVAPASPPPPDGPLAHRLAACRVSPATPGPALSDILRSVQRARTPSGPPARPSRSMWDLSRLSQLSGSSDGDNELKKSWGSKDTPAKALMRQRGTGGGPWGEVDSRPPWGGALPLPPAHRLRYLSPARRRFGGDATFKLQEPRGVRPSDWAPRAGLGGQP.

Residues 1–293 (MAASQLAALE…LYAASCPLPP (293 aa)) are DUF1669. Disordered regions lie at residues 292-334 (PPAP…PLAH), 359-436 (RART…LPPA), and 452-478 (DATF…GGQP). Basic residues predominate over residues 309–319 (RSPHRVSRRRS). A compositionally biased stretch (polar residues) spans 379-388 (RLSQLSGSSD).

This sequence belongs to the FAM83 family. As to quaternary structure, directly interacts (via DUF1669) with CSNK1A1, CSNK1A1L, CSNK1D and CSNK1E. May interact with RAF1.

The protein localises to the cytoplasm. The protein resides in the perinuclear region. Its function is as follows. May play a role in MAPK signaling. The sequence is that of Protein FAM83E from Homo sapiens (Human).